We begin with the raw amino-acid sequence, 303 residues long: Taste receptor type 2 member 13 (303 aa).

Over 1-7 the chain is Extracellular; sequence MESALPS. The chain crosses the membrane as a helical span at residues 8–28; that stretch reads IFTLVIIAEFIIGNLSNGFIV. Topologically, residues 29 to 55 are cytoplasmic; sequence LINCIDWVSKRELSSVDKLLIILAISR. The chain crosses the membrane as a helical span at residues 56 to 76; the sequence is IGLIWEILVSWFLALHYLAIF. Residues 77 to 85 are Extracellular-facing; sequence VSGTGLRIM. The helical transmembrane segment at 86–106 threads the bilayer; that stretch reads IFSWIVSNHFNLWLATIFSIF. The Cytoplasmic segment spans residues 107–128; the sequence is YLLKIASFSSPAFLYLKWRVNK. Residues 129-149 form a helical membrane-spanning segment; it reads VILMILLGTLVFLFLNLIQIN. The Extracellular segment spans residues 150 to 184; that stretch reads MHIKDWLDRYERNTTWNFSMSDFETFSVSVKFTMT. N-linked (GlcNAc...) asparagine glycosylation is found at asparagine 162 and asparagine 166. The helical transmembrane segment at 185-205 threads the bilayer; sequence MFSLTPFTVAFISFLLLIFSL. The Cytoplasmic portion of the chain corresponds to 206–232; sequence QKHLQKMQLNYKGHRDPRTKVHTNALK. A helical membrane pass occupies residues 233 to 253; that stretch reads IVISFLLFYASFFLCVLISWI. Over 254–261 the chain is Extracellular; sequence SELYQNTV. Residues 262-282 traverse the membrane as a helical segment; the sequence is IYMLCETIGVFSPSSHSFLLI. The Cytoplasmic segment spans residues 283-303; sequence LGNAKLRQAFLLVAAKVWAKR.

This sequence belongs to the G-protein coupled receptor T2R family. Expressed in subsets of taste receptor cells of the tongue and palate epithelium and exclusively in gustducin-positive cells.

Its subcellular location is the membrane. Functionally, receptor that may play a role in the perception of bitterness and is gustducin-linked. May play a role in sensing the chemical composition of the gastrointestinal content. The activity of this receptor may stimulate alpha gustducin, mediate PLC-beta-2 activation and lead to the gating of TRPM5. The sequence is that of Taste receptor type 2 member 13 (TAS2R13) from Homo sapiens (Human).